The sequence spans 109 residues: Hainantoxin-XVIII (109 aa).

The first 18 residues, 1–18 (MKLSIIIIATSLVIAVVA), serve as a signal peptide directing secretion. The propeptide occupies 19–46 (FPSKDSKAIENDKTEQRMEIVVQETARA). Cystine bridges form between cysteine 47-cysteine 62, cysteine 55-cysteine 68, cysteine 59-cysteine 108, and cysteine 61-cysteine 81.

Belongs to the neurotoxin 25 family. F7 subfamily. In terms of tissue distribution, expressed by the venom gland.

The protein localises to the secreted. Putative ion channel inhibitor. This chain is Hainantoxin-XVIII, found in Cyriopagopus hainanus (Chinese bird spider).